The sequence spans 523 residues: DELLA protein RGL3 (523 aa).

The segment at methionine 1–glycine 28 is disordered. The DELLA motif motif lies at aspartate 34 to alanine 38. Residues leucine 56 to glutamate 60 carry the LEXLE motif motif. Positions valine 78–proline 82 match the VHYNP motif motif. A GRAS domain is found at valine 148–lysine 516. The tract at residues valine 155–isoleucine 209 is leucine repeat I (LRI). A VHIID region spans residues glutamine 228 to glycine 293. Positions valine 259–aspartate 263 match the VHIID motif. Residues glutamate 305–aspartate 337 form a leucine repeat II (LRII) region. The PFYRE stretch occupies residues leucine 348–asparagine 437. Residues leucine 356–leucine 360 carry the LXXLL motif motif. Residues alanine 440–lysine 516 form an SAW region.

The protein belongs to the GRAS family. DELLA subfamily. Interacts directly with the GID2/SLY1 component of the SCF(GID2) complex, suggesting that it may be ubiquitinated. Interacts (via N-terminus) with GID1A, GID1B and GID1B (via N-terminus). Interacts with the BOI proteins BOI, BRG1, BRG2 and BRG3. Phosphorylated. In terms of processing, may be ubiquitinated. In terms of tissue distribution, expressed at very low level. Mainly expressed in germinating seeds and flowers and siliques. Not expressed in other tissues.

It localises to the nucleus. Probable transcriptional regulator that acts as a repressor of the gibberellin (GA) signaling pathway. No effect of the BOI proteins on its stability. Probably acts by participating in large multiprotein complexes that repress transcription of GA-inducible genes. Its activity may be regulated by phytohormones such as auxin and ethylene. The protein is DELLA protein RGL3 (RGL3) of Arabidopsis thaliana (Mouse-ear cress).